A 93-amino-acid chain; its full sequence is Probable Fe(2+)-trafficking protein (93 aa).

It belongs to the Fe(2+)-trafficking protein family.

Functionally, could be a mediator in iron transactions between iron acquisition and iron-requiring processes, such as synthesis and/or repair of Fe-S clusters in biosynthetic enzymes. The chain is Probable Fe(2+)-trafficking protein from Polaromonas naphthalenivorans (strain CJ2).